Reading from the N-terminus, the 122-residue chain is UPF0145 protein BamMC406_5002 (122 aa).

The protein belongs to the UPF0145 family.

The polypeptide is UPF0145 protein BamMC406_5002 (Burkholderia ambifaria (strain MC40-6)).